A 623-amino-acid chain; its full sequence is MPHSDELDAGDVLAVENLNIAFMQEQHKIAAVRNLSFSLQRGETLAIVGESGSGKSVTALALMRLLEQAGGLVQCDKMLLQRRSREVIELSEQSAAQMRHVRGADMAMIFQEPMTSLNPVFTVGEQIAESIRLHQNASREEAMVEAKRMLDQVRIPEAQTILSRYPHQLSGGMRQRVMIAMALSCRPAVLIADEPTTALDVTIQAQILQLIKVLQKEMSMGVIFITHDMGVVAEIADRVLVMYQGEAVETGSVEQIFHAPQHPYTRALLAAVPQLGAMKGLDYPRRFPLISLEHPAKQEPPIEQKTVVDGEPVLRVRNLVSRFPLRSGLLNRVTREVHAVEKVSFDLWPGETLSLVGESGSGKSTTGWALLRLVESQGGEIIFNGQRIDTLSPGKLQALRRDIQFIFQDPYASLDPRQTIGDSILEPLRVHGLLPGKEAAARVAWLLERVGLLPEHAWRYPHEFSGGQRQRICIARALALNPKVIIADEAVSALDVSIRGQIINLLLDLQRDFGIAYLFISHDMAVVERISHRVAAMYLGQIVEIGPRRAVFENPQHPYTRKLLAAVPVAEPSRQRPQRVLLSDDLPSNIHLRGEEVAAVSLQCVGPGHYVAQPQSEYAFMRR.

2 consecutive ABC transporter domains span residues 15-269 and 314-564; these read VENL…RALL and LRVR…RKLL. ATP contacts are provided by residues 49–56 and 357–364; these read GESGSGKS.

The protein belongs to the ABC transporter superfamily. Glutathione importer (TC 3.A.1.5.11) family. As to quaternary structure, the complex is composed of two ATP-binding proteins (GsiA), two transmembrane proteins (GsiC and GsiD) and a solute-binding protein (GsiB).

It localises to the cell inner membrane. The catalysed reaction is glutathione(out) + ATP + H2O = glutathione(in) + ADP + phosphate + H(+). In terms of biological role, part of the ABC transporter complex GsiABCD involved in glutathione import. Responsible for energy coupling to the transport system. This is Glutathione import ATP-binding protein GsiA from Escherichia coli O1:K1 / APEC.